The chain runs to 331 residues: MKQTVYTASPESQQIHVWSLNHEGTLTLVQVVDVPGQVQPMVVSPDKRYLYVGVRPEFRVLAYRIAPDDGALTFAAESALPGSPTHISTDHHGRFVFVGSYNAGNVSVTRLQDGLPVELVDVVERLDGCHSANITPDNRTLWVPALKQDRICLFTLSDDGHLVAQEPAEVNTVEGAGPRHMVFHPNRQYAYCVNELNSSVDVWQLKNPHGEIECVQTLDMMPADFSDTRWAADIHITPDGRHLYACDRTASLITVFSVSEDGSVLSVEGFQPTEAQPRGFNIDNSGKYLIAAGQKSHHIAVYEITGTQGLLTEKGRYAVGQGPMWVVVNAY.

It belongs to the cycloisomerase 2 family.

It catalyses the reaction 6-phospho-D-glucono-1,5-lactone + H2O = 6-phospho-D-gluconate + H(+). It functions in the pathway carbohydrate degradation; pentose phosphate pathway; D-ribulose 5-phosphate from D-glucose 6-phosphate (oxidative stage): step 2/3. In terms of biological role, catalyzes the hydrolysis of 6-phosphogluconolactone to 6-phosphogluconate. This is 6-phosphogluconolactonase from Salmonella paratyphi B (strain ATCC BAA-1250 / SPB7).